Consider the following 535-residue polypeptide: Serine/threonine-protein kinase C (535 aa).

The region spanning 12 to 277 is the Protein kinase domain; that stretch reads YRIIETLGRG…AMAQTLQGNF (266 aa). Residues 18 to 26 and K43 contribute to the ATP site; that span reads LGRGGFGET. The Proton acceptor role is filled by D142. The interval 371–535 is disordered; the sequence is NNPPPAVEEP…GEKPIDPEQN (165 aa). Pro residues predominate over residues 402–421; it reads SPIPTPATPSPEPTPSPSPS. The span at 422–435 shows a compositional bias: low complexity; sequence PETTSSPTEDTITP. Pro residues-rich tracts occupy residues 446–464 and 472–498; these read APIP…PQPS and TPAP…PTPQ.

Belongs to the protein kinase superfamily. Ser/Thr protein kinase family.

It catalyses the reaction L-seryl-[protein] + ATP = O-phospho-L-seryl-[protein] + ADP + H(+). The catalysed reaction is L-threonyl-[protein] + ATP = O-phospho-L-threonyl-[protein] + ADP + H(+). The polypeptide is Serine/threonine-protein kinase C (spkC) (Synechocystis sp. (strain ATCC 27184 / PCC 6803 / Kazusa)).